Here is a 400-residue protein sequence, read N- to C-terminus: GTPase Obg (400 aa).

Residues 1–159 (MKFVDEVQIR…RTLKLELLLL (159 aa)) enclose the Obg domain. Positions 160–333 (ADVGMLGLPN…VCYDILDLLD (174 aa)) constitute an OBG-type G domain. Residues 166–173 (GLPNAGKS), 191–195 (FTTLV), 213–216 (DIPG), 283–286 (NKMD), and 314–316 (TAI) contribute to the GTP site. Mg(2+)-binding residues include Ser173 and Thr193.

This sequence belongs to the TRAFAC class OBG-HflX-like GTPase superfamily. OBG GTPase family. As to quaternary structure, monomer. Requires Mg(2+) as cofactor.

Its subcellular location is the cytoplasm. An essential GTPase which binds GTP, GDP and possibly (p)ppGpp with moderate affinity, with high nucleotide exchange rates and a fairly low GTP hydrolysis rate. Plays a role in control of the cell cycle, stress response, ribosome biogenesis and in those bacteria that undergo differentiation, in morphogenesis control. The protein is GTPase Obg of Aeromonas hydrophila subsp. hydrophila (strain ATCC 7966 / DSM 30187 / BCRC 13018 / CCUG 14551 / JCM 1027 / KCTC 2358 / NCIMB 9240 / NCTC 8049).